Reading from the N-terminus, the 502-residue chain is Cytochrome c-552 (502 aa).

Residues 1-25 form the signal peptide; it reads MKYLTKSRVIATIAMLGCLSVSAWA. Residue His105 participates in heme c binding. Residues Cys133, Cys136, and Lys137 each contribute to the heme site. Residues Cys171, Cys174, His175, Cys220, Cys223, and His224 each contribute to the heme c site. The Ca(2+) site is built by Glu226, Tyr227, Lys271, and Gln273. Tyr227 provides a ligand contact to substrate. His274 provides a ligand contact to substrate. Residues His285, Cys292, Cys295, His296, His311, Cys324, Cys327, His328, and His403 each contribute to the heme c site. The interval 481 to 502 is disordered; that stretch reads RERGLLPEVTPKSVTTPKVDAK.

This sequence belongs to the cytochrome c-552 family. The cofactor is Ca(2+). Requires heme c as cofactor.

The protein localises to the periplasm. The catalysed reaction is 6 Fe(III)-[cytochrome c] + NH4(+) + 2 H2O = 6 Fe(II)-[cytochrome c] + nitrite + 8 H(+). Its pathway is nitrogen metabolism; nitrate reduction (assimilation). Its function is as follows. Catalyzes the reduction of nitrite to ammonia, consuming six electrons in the process. The chain is Cytochrome c-552 from Haemophilus ducreyi (strain 35000HP / ATCC 700724).